Here is a 443-residue protein sequence, read N- to C-terminus: Glutamate-1-semialdehyde 2,1-aminomutase (443 aa).

Residue K272 is modified to N6-(pyridoxal phosphate)lysine.

Belongs to the class-III pyridoxal-phosphate-dependent aminotransferase family. HemL subfamily. In terms of assembly, homodimer. The cofactor is pyridoxal 5'-phosphate.

The protein resides in the cytoplasm. It catalyses the reaction (S)-4-amino-5-oxopentanoate = 5-aminolevulinate. Its pathway is porphyrin-containing compound metabolism; protoporphyrin-IX biosynthesis; 5-aminolevulinate from L-glutamyl-tRNA(Glu): step 2/2. The protein operates within porphyrin-containing compound metabolism; chlorophyll biosynthesis. The protein is Glutamate-1-semialdehyde 2,1-aminomutase of Chloroflexus aurantiacus (strain ATCC 29366 / DSM 635 / J-10-fl).